A 156-amino-acid polypeptide reads, in one-letter code: S-ribosylhomocysteine lyase (156 aa).

His-56, His-60, and Cys-123 together coordinate Fe cation.

Belongs to the LuxS family. As to quaternary structure, homodimer. Fe cation is required as a cofactor.

The enzyme catalyses S-(5-deoxy-D-ribos-5-yl)-L-homocysteine = (S)-4,5-dihydroxypentane-2,3-dione + L-homocysteine. Its function is as follows. Involved in the synthesis of autoinducer 2 (AI-2) which is secreted by bacteria and is used to communicate both the cell density and the metabolic potential of the environment. The regulation of gene expression in response to changes in cell density is called quorum sensing. Catalyzes the transformation of S-ribosylhomocysteine (RHC) to homocysteine (HC) and 4,5-dihydroxy-2,3-pentadione (DPD). The chain is S-ribosylhomocysteine lyase from Staphylococcus saprophyticus subsp. saprophyticus (strain ATCC 15305 / DSM 20229 / NCIMB 8711 / NCTC 7292 / S-41).